Here is a 114-residue protein sequence, read N- to C-terminus: UPF0145 protein PF1756 (114 aa).

This sequence belongs to the UPF0145 family.

This is UPF0145 protein PF1756 from Pyrococcus furiosus (strain ATCC 43587 / DSM 3638 / JCM 8422 / Vc1).